A 64-amino-acid polypeptide reads, in one-letter code: Putative antitoxin VapB1 (64 aa).

Functionally, possibly the antitoxin component of a type II toxin-antitoxin (TA) system. Its cognate toxin is VapC1 (Potential). The sequence is that of Putative antitoxin VapB1 (vapB1) from Methanocaldococcus jannaschii (strain ATCC 43067 / DSM 2661 / JAL-1 / JCM 10045 / NBRC 100440) (Methanococcus jannaschii).